The following is a 428-amino-acid chain: G2/mitotic-specific cyclin-1 (428 aa).

A disordered region spans residues 1-22 (MKFSEEKNVSNNPTNFEGGLDS).

The protein belongs to the cyclin family. Cyclin AB subfamily. As to quaternary structure, interacts with the CDC2 protein kinase to form a serine/threonine kinase holoenzyme complex also known as maturation promoting factor (MPF). The cyclin subunit imparts substrate specificity to the complex.

Functionally, essential for the control of the cell cycle at the G2/M (mitosis) transition. This Medicago sativa subsp. varia (Alfalfa) protein is G2/mitotic-specific cyclin-1.